The chain runs to 113 residues: WRMVYDNNVNTIVMLTKAREGNEEQSAIYWPSDIGEQMNMKSITVTLVSDETDGPALKRKLKIERGAISRTVTQLHYTGWNSTSCPEDGRDVIELVNKMQENIRSTGDGVALI.

The region spanning W1–I113 is the Tyrosine-protein phosphatase domain.

The protein belongs to the protein-tyrosine phosphatase family.

It carries out the reaction O-phospho-L-tyrosyl-[protein] + H2O = L-tyrosyl-[protein] + phosphate. The chain is Tyrosine-protein phosphatase 15 (STY-15) from Styela plicata (Wrinkled sea squirt).